A 305-amino-acid chain; its full sequence is MGLQKIVKKYNKKMKRKGLAGLDTAIILIAFIITASVLAYVAINMGLFVTQKAKSTINKGEETASTALTLSGSVLYAVNYPSNTRSYWIYFTVSPSSGVSSVELSPTTTAISFTASTEGVAYSNIYKYTLLTVDPSSLGHAVYANGQYLNLINQQTSAGQTYVYYPNPYYALLALNYTLYNYYLSTKTPSPIFINSSTLSSIPQWLKNDNSFTFTLNISGQLVTYDVFVNQTFAFTYPVAGDPLIGSAIAPAGSVIGVMILFGPDLGSHVFQYQTVTIQITPNVGSPLTISEYIYQPEGSVSVIG.

Positions 1–18 (MGLQKIVKKYNKKMKRKG) are cleaved as a propeptide — propeptide.

Belongs to the archaeal flagellin family. Glycosylated.

Its subcellular location is the archaeal flagellum. In terms of biological role, flagellin is the subunit protein which polymerizes to form the filaments of archaeal flagella. The sequence is that of Flagellin FlaB2 from Saccharolobus shibatae (strain ATCC 51178 / DSM 5389 / JCM 8931 / NBRC 15437 / B12) (Sulfolobus shibatae).